A 257-amino-acid polypeptide reads, in one-letter code: 3-dehydroquinate dehydratase (257 aa).

Residues 50–52 (EWR) and arginine 86 contribute to the 3-dehydroquinate site. Histidine 147 serves as the catalytic Proton donor/acceptor. The Schiff-base intermediate with substrate role is filled by lysine 174. 3-dehydroquinate-binding residues include arginine 216, serine 235, and glutamine 239.

This sequence belongs to the type-I 3-dehydroquinase family. In terms of assembly, homodimer.

It catalyses the reaction 3-dehydroquinate = 3-dehydroshikimate + H2O. It functions in the pathway metabolic intermediate biosynthesis; chorismate biosynthesis; chorismate from D-erythrose 4-phosphate and phosphoenolpyruvate: step 3/7. Involved in the third step of the chorismate pathway, which leads to the biosynthesis of aromatic amino acids. Catalyzes the cis-dehydration of 3-dehydroquinate (DHQ) and introduces the first double bond of the aromatic ring to yield 3-dehydroshikimate. The sequence is that of 3-dehydroquinate dehydratase from Geobacillus thermodenitrificans (strain NG80-2).